The chain runs to 237 residues: Leucyl/phenylalanyl-tRNA--protein transferase (237 aa).

Belongs to the L/F-transferase family.

It localises to the cytoplasm. The enzyme catalyses N-terminal L-lysyl-[protein] + L-leucyl-tRNA(Leu) = N-terminal L-leucyl-L-lysyl-[protein] + tRNA(Leu) + H(+). It carries out the reaction N-terminal L-arginyl-[protein] + L-leucyl-tRNA(Leu) = N-terminal L-leucyl-L-arginyl-[protein] + tRNA(Leu) + H(+). The catalysed reaction is L-phenylalanyl-tRNA(Phe) + an N-terminal L-alpha-aminoacyl-[protein] = an N-terminal L-phenylalanyl-L-alpha-aminoacyl-[protein] + tRNA(Phe). Its function is as follows. Functions in the N-end rule pathway of protein degradation where it conjugates Leu, Phe and, less efficiently, Met from aminoacyl-tRNAs to the N-termini of proteins containing an N-terminal arginine or lysine. This is Leucyl/phenylalanyl-tRNA--protein transferase from Photobacterium profundum (strain SS9).